Reading from the N-terminus, the 220-residue chain is Deoxyribose-phosphate aldolase (220 aa).

Aspartate 89 (proton donor/acceptor) is an active-site residue. Residue lysine 151 is the Schiff-base intermediate with acetaldehyde of the active site. Lysine 180 (proton donor/acceptor) is an active-site residue.

Belongs to the DeoC/FbaB aldolase family. DeoC type 1 subfamily.

The protein localises to the cytoplasm. The enzyme catalyses 2-deoxy-D-ribose 5-phosphate = D-glyceraldehyde 3-phosphate + acetaldehyde. It participates in carbohydrate degradation; 2-deoxy-D-ribose 1-phosphate degradation; D-glyceraldehyde 3-phosphate and acetaldehyde from 2-deoxy-alpha-D-ribose 1-phosphate: step 2/2. In terms of biological role, catalyzes a reversible aldol reaction between acetaldehyde and D-glyceraldehyde 3-phosphate to generate 2-deoxy-D-ribose 5-phosphate. This Staphylococcus haemolyticus (strain JCSC1435) protein is Deoxyribose-phosphate aldolase.